Reading from the N-terminus, the 485-residue chain is Serine/threonine-protein kinase 4 (485 aa).

The 252-residue stretch at 30-281 (FDVLEKLGEG…ATELLQHPFI (252 aa)) folds into the Protein kinase domain. ATP contacts are provided by residues 36 to 44 (LGEGSYGSV) and K59. The Proton acceptor role is filled by D149. T183 bears the Phosphothreonine; by autocatalysis mark. A coiled-coil region spans residues 287 to 313 (ESILRHLINEAQDAKLKRTELKQREVE). The SARAH domain maps to 431-478 (YSFLKDWSVTELQLRLNSLDPMMEQEIEEIHHKYQAKRQPILEAIESK).

This sequence belongs to the protein kinase superfamily. STE Ser/Thr protein kinase family. STE20 subfamily. As to quaternary structure, homodimer; mediated via the coiled-coil region. Mg(2+) is required as a cofactor. In terms of processing, autophosphorylated on Thr-183. Post-translationally, proteolytically cleaved by caspase-3 during apoptosis at Asp-326 resulting in a 37 kDa form. Proteolytic cleavage results in kinase activation and nuclear translocation of the truncated form (MST1/N).

Its subcellular location is the cytoplasm. The protein localises to the nucleus. The catalysed reaction is L-seryl-[protein] + ATP = O-phospho-L-seryl-[protein] + ADP + H(+). It catalyses the reaction L-threonyl-[protein] + ATP = O-phospho-L-threonyl-[protein] + ADP + H(+). The C-terminal non-catalytic region inhibits the kinase activity, the enzyme is activated by caspase-cleavage. Homodimerization and autophosphorylation of Thr-183 is also required for full activation. Stress-activated, pro-apoptotic kinase which, following caspase-cleavage, enters the nucleus and induces chromatin condensation followed by internucleosomal DNA fragmentation. Key component of the Hippo signaling pathway which plays a pivotal role in organ size control and tumor suppression by restricting proliferation and promoting apoptosis. The core of this pathway is composed of a kinase cascade wherein stk3/mst2 and stk4/mst1, in complex with its regulatory protein sav1, phosphorylates and activates lats1/2 in complex with its regulatory protein mob1, which in turn phosphorylates and inactivates yap1 oncoprotein and wwtr1/taz. Phosphorylation of yap1 by lats2 inhibits its translocation into the nucleus to regulate cellular genes important for cell proliferation, cell death, and cell migration. Phosphorylates 'Ser-14' of histone H2B (H2BS14ph) during apoptosis. The protein is Serine/threonine-protein kinase 4 (stk4) of Xenopus tropicalis (Western clawed frog).